The primary structure comprises 166 residues: Interferon gamma (166 aa).

The signal sequence occupies residues 1–23 (MKYTSSFLALLLCVLLGFSGSYG). Position 24 is a pyrrolidone carboxylic acid (Gln24). 2 N-linked (GlcNAc...) asparagine glycosylation sites follow: Asn39 and Asn106.

Belongs to the type II (or gamma) interferon family. Homodimer. Interacts with IFNGR1 (via extracellular domain); this interaction promotes IFNGR1 dimerization. As to expression, released primarily from activated T lymphocytes.

It localises to the secreted. Its function is as follows. Type II interferon produced by immune cells such as T-cells and NK cells that plays crucial roles in antimicrobial, antiviral, and antitumor responses by activating effector immune cells and enhancing antigen presentation. Primarily signals through the JAK-STAT pathway after interaction with its receptor IFNGR1 to affect gene regulation. Upon IFNG binding, IFNGR1 intracellular domain opens out to allow association of downstream signaling components JAK2, JAK1 and STAT1, leading to STAT1 activation, nuclear translocation and transcription of IFNG-regulated genes. Many of the induced genes are transcription factors such as IRF1 that are able to further drive regulation of a next wave of transcription. Plays a role in class I antigen presentation pathway by inducing a replacement of catalytic proteasome subunits with immunoproteasome subunits. In turn, increases the quantity, quality, and repertoire of peptides for class I MHC loading. Increases the efficiency of peptide generation also by inducing the expression of activator PA28 that associates with the proteasome and alters its proteolytic cleavage preference. Up-regulates as well MHC II complexes on the cell surface by promoting expression of several key molecules such as cathepsins B/CTSB, H/CTSH, and L/CTSL. Participates in the regulation of hematopoietic stem cells during development and under homeostatic conditions by affecting their development, quiescence, and differentiation. In Ovis aries (Sheep), this protein is Interferon gamma (IFNG).